The primary structure comprises 502 residues: ATP synthase subunit alpha (502 aa).

Glycine 169 to threonine 176 serves as a coordination point for ATP.

The protein belongs to the ATPase alpha/beta chains family. As to quaternary structure, F-type ATPases have 2 components, CF(1) - the catalytic core - and CF(0) - the membrane proton channel. CF(1) has five subunits: alpha(3), beta(3), gamma(1), delta(1), epsilon(1). CF(0) has three main subunits: a(1), b(2) and c(9-12). The alpha and beta chains form an alternating ring which encloses part of the gamma chain. CF(1) is attached to CF(0) by a central stalk formed by the gamma and epsilon chains, while a peripheral stalk is formed by the delta and b chains.

It localises to the cell inner membrane. It catalyses the reaction ATP + H2O + 4 H(+)(in) = ADP + phosphate + 5 H(+)(out). In terms of biological role, produces ATP from ADP in the presence of a proton gradient across the membrane. The alpha chain is a regulatory subunit. The protein is ATP synthase subunit alpha of Trichlorobacter lovleyi (strain ATCC BAA-1151 / DSM 17278 / SZ) (Geobacter lovleyi).